Here is a 483-residue protein sequence, read N- to C-terminus: Probable Xaa-Pro aminopeptidase MCYG_06503 (483 aa).

Aspartate 233, aspartate 244, glutamate 409, and glutamate 453 together coordinate Mn(2+).

The protein belongs to the peptidase M24B family. It depends on Mn(2+) as a cofactor.

The catalysed reaction is Release of any N-terminal amino acid, including proline, that is linked to proline, even from a dipeptide or tripeptide.. Catalyzes the removal of a penultimate prolyl residue from the N-termini of peptides. The polypeptide is Probable Xaa-Pro aminopeptidase MCYG_06503 (Arthroderma otae (strain ATCC MYA-4605 / CBS 113480) (Microsporum canis)).